Here is a 610-residue protein sequence, read N- to C-terminus: Chaperone protein DnaK (610 aa).

Position 173 is a phosphothreonine; by autocatalysis (Thr173). Over residues 579-592 the composition is skewed to low complexity; the sequence is QQQQAQGANAGQNN. The interval 579–610 is disordered; that stretch reads QQQQAQGANAGQNNDSTVEDAEFKEVKDDDKK. The segment covering 599–610 has biased composition (basic and acidic residues); the sequence is AEFKEVKDDDKK.

Belongs to the heat shock protein 70 family.

Functionally, acts as a chaperone. This is Chaperone protein DnaK from Staphylococcus aureus (strain bovine RF122 / ET3-1).